A 137-amino-acid chain; its full sequence is Global transcriptional regulator Spx (137 aa).

The cysteines at positions 10 and 13 are disulfide-linked.

It belongs to the ArsC family. Spx subfamily. As to quaternary structure, interacts with the C-terminal domain of the alpha subunit of the RNAP.

The protein localises to the cytoplasm. Its function is as follows. Global transcriptional regulator that plays a key role in stress response and exerts either positive or negative regulation of genes. Acts by interacting with the C-terminal domain of the alpha subunit of the RNA polymerase (RNAP). This interaction can enhance binding of RNAP to the promoter region of target genes and stimulate their transcription, or block interaction of RNAP with activator. The protein is Global transcriptional regulator Spx of Streptococcus agalactiae serotype III (strain NEM316).